The chain runs to 363 residues: Phosphoserine aminotransferase (363 aa).

R41 is an L-glutamate binding site. Pyridoxal 5'-phosphate-binding positions include 75 to 76 (AS), W100, T155, D175, and Q198. Residue K199 is modified to N6-(pyridoxal phosphate)lysine. Pyridoxal 5'-phosphate is bound at residue 239-240 (NT).

This sequence belongs to the class-V pyridoxal-phosphate-dependent aminotransferase family. SerC subfamily. Homodimer. Pyridoxal 5'-phosphate serves as cofactor.

It is found in the cytoplasm. The enzyme catalyses O-phospho-L-serine + 2-oxoglutarate = 3-phosphooxypyruvate + L-glutamate. It catalyses the reaction 4-(phosphooxy)-L-threonine + 2-oxoglutarate = (R)-3-hydroxy-2-oxo-4-phosphooxybutanoate + L-glutamate. It functions in the pathway amino-acid biosynthesis; L-serine biosynthesis; L-serine from 3-phospho-D-glycerate: step 2/3. Functionally, catalyzes the reversible conversion of 3-phosphohydroxypyruvate to phosphoserine and of 3-hydroxy-2-oxo-4-phosphonooxybutanoate to phosphohydroxythreonine. The chain is Phosphoserine aminotransferase from Streptococcus suis (strain 98HAH33).